Reading from the N-terminus, the 380-residue chain is MSTSNLFTPLQFGKCLLQHKLVLSPMTRFRADNEGVPLPYVKTYYCQRASLPGTLLLTEATAISRRARGFPNVPGIWSQEQIAGWKEVVDAVHAKGSYIWLQLWATGRAAEVGVLKANGFDLVSSSAVPVSPGEPTPRALSDDEINSYIGDFVQAAKNAVLEAGFDGVELHGANGFLIDQFLQSPCNQRTDQWGGCIENRSRFGLEITRRVIDAVGKDHVGMKLSTWSTFQGMGTMDDLIPQFEHFIMRLREIGIAYLHLANSRWVEEEDPTIRTHPDIHNETFVRMWGKEKPVLLAGGYGPESAKLVVDETYSDHKNIGVVFGRHYISNPDLPFRLKMGLPLQKYNRETFYIPFSDEGYLDYPYSEEYITENKKQAVLA.

Residues 25-27, Ala-60, Gln-102, and His-171 each bind FMN; that span reads PMT. Substrate is bound by residues His-171 and Asn-174. FMN contacts are provided by residues Lys-223, Gly-299, 324 to 325, and Arg-325; that span reads GR. Tyr-352 serves as a coordination point for substrate.

This sequence belongs to the NADH:flavin oxidoreductase/NADH oxidase family.

Functionally, probable inactive dehydrogenase; part of the gene cluster that mediates the biosynthesis of fungal ergot alkaloid ergovaline, the predominant ergopeptine product in E.festucae var. lolii. DmaW catalyzes the first step of ergot alkaloid biosynthesis by condensing dimethylallyl diphosphate (DMAP) and tryptophan to form 4-dimethylallyl-L-tryptophan. The second step is catalyzed by the methyltransferase easF that methylates 4-dimethylallyl-L-tryptophan in the presence of S-adenosyl-L-methionine, resulting in the formation of 4-dimethylallyl-L-abrine. The catalase easC and the FAD-dependent oxidoreductase easE then transform 4-dimethylallyl-L-abrine to chanoclavine-I which is further oxidized by easD in the presence of NAD(+), resulting in the formation of chanoclavine-I aldehyde. Agroclavine dehydrogenase easG then mediates the conversion of chanoclavine-I aldehyde to agroclavine via a non-enzymatic adduct reaction: the substrate is an iminium intermediate that is formed spontaneously from chanoclavine-I aldehyde in the presence of glutathione. The presence of easA is not required to complete this reaction. Further conversion of agroclavine to paspalic acid is a two-step process involving oxidation of agroclavine to elymoclavine and of elymoclavine to paspalic acid, the second step being performed by the elymoclavine oxidase cloA. Paspalic acid is then further converted to D-lysergic acid. Ergovaline is assembled from D-lysergic acid and three different amino acids by the D-lysergyl-peptide-synthetase composed of a monomudular (lpsB) and a trimodular (lpsA) nonribosomal peptide synthetase subunit. This chain is Probable inactive reductase easA, found in Epichloe festucae var. lolii (Neotyphodium lolii).